Here is a 223-residue protein sequence, read N- to C-terminus: UPF0758 protein FMG_0357 (223 aa).

Residues 101–223 enclose the MPN domain; it reads SLNDPDSVAE…SLSMRKGMYF (123 aa). Zn(2+) contacts are provided by His-172, His-174, and Asp-185. Residues 172 to 185 carry the JAMM motif motif; it reads HNHPSGSLIPSNAD.

Belongs to the UPF0758 family.

The sequence is that of UPF0758 protein FMG_0357 from Finegoldia magna (strain ATCC 29328 / DSM 20472 / WAL 2508) (Peptostreptococcus magnus).